We begin with the raw amino-acid sequence, 151 residues long: UPF0178 protein PFL_5989 (151 aa).

Belongs to the UPF0178 family.

The chain is UPF0178 protein PFL_5989 from Pseudomonas fluorescens (strain ATCC BAA-477 / NRRL B-23932 / Pf-5).